A 457-amino-acid polypeptide reads, in one-letter code: Multidrug resistance protein MdtK (457 aa).

A run of 12 helical transmembrane segments spans residues Leu-11–Val-31, Ile-53–Ala-73, Trp-93–Ile-113, Ala-127–Ala-147, Gly-160–Tyr-180, Gly-189–Val-209, Leu-243–Val-263, Ile-276–Thr-296, Ala-314–Val-334, Val-350–Ile-370, Ile-387–Ala-407, and Pro-418–Leu-438.

Belongs to the multi antimicrobial extrusion (MATE) (TC 2.A.66.1) family. MdtK subfamily.

Its subcellular location is the cell inner membrane. Its function is as follows. Multidrug efflux pump that functions probably as a Na(+)/drug antiporter. The polypeptide is Multidrug resistance protein MdtK (Escherichia coli O17:K52:H18 (strain UMN026 / ExPEC)).